The following is a 380-amino-acid chain: Guanine nucleotide-binding protein subunit beta (380 aa).

WD repeat units follow at residues 64-94 (GHSG…IVWN), 106-136 (LHCP…SIFN), 155-186 (GHKG…VLWD), 203-234 (GHTA…RLWD), 247-277 (GHED…RLFD), 296-326 (NELP…YVWD), and 342-372 (SHDG…KIWA).

It belongs to the WD repeat G protein beta family. G proteins are composed of 3 units, alpha, beta and gamma. In terms of tissue distribution, present in the root, leaf and tassel.

In terms of biological role, guanine nucleotide-binding proteins (G proteins) are involved as a modulator or transducer in various transmembrane signaling systems. The beta and gamma chains are required for the GTPase activity, for replacement of GDP by GTP, and for G protein-effector interaction. The sequence is that of Guanine nucleotide-binding protein subunit beta (GB1) from Zea mays (Maize).